A 406-amino-acid polypeptide reads, in one-letter code: MADPQAFCVAEERSGHCAVVDGHFLYVWGGYVSIEDNEVYLPNDEMWTYDIDSGLWKMHLMEGELPPSMSGSCGACIHGRLYVFGGYDDKGYSNRLYFVNLRTRDGTYTWEKITKFDGQPPTPRDKLSCWVYKDRLIYFGGYGYRRHSELQECFDVHDASWEEQIFWGWHNDVHVFDTKTRTWSQPEIKGGVPPQPRAAHSCAVLGNKGYVFGGRVLQTRMNDLHYLNLDTWVWSGRISVNGESPKHRSWHTLTAITDDKLFLFGGLNADNIPLSDGWIHNITTNCWKQLRHLPYTRPRLWHTACLGKENEIMVFGGSKDNLLFLDTGHCNDLLIFQTQPYSLLRSCLDCIGKNAIILKSQISLLPPKLLQQVLKKITFWTAANYRKEQRIRKEETENNQPRVSSC.

Kelch repeat units follow at residues 24-76 (FLYV…CGAC), 80-134 (RLYV…VYKD), 135-181 (RLIY…TKTR), 208-258 (KGYV…AITD), 260-307 (KLFL…ACLG), and 311-361 (EIMV…LKSQ).

As to quaternary structure, component of a CRL5 E3 ubiquitin-protein ligase complex, also named ECS (Elongin BC-CUL2/5-SOCS-box protein) complex, composed of CUL5, Elongin BC (ELOB and ELOC), RBX1 and substrate-specific adapter KLHDC1.

Its subcellular location is the cytoplasm. The protein localises to the cytosol. It functions in the pathway protein modification; protein ubiquitination. In terms of biological role, substrate-recognition component of a Cul5-RING (CRL5) E3 ubiquitin-protein ligase complex of the DesCEND (destruction via C-end degrons) pathway, which recognizes a C-degron located at the extreme C terminus of target proteins, leading to their ubiquitination and degradation. The C-degron recognized by the DesCEND pathway is usually a motif of less than ten residues and can be present in full-length proteins, truncated proteins or proteolytically cleaved forms. The CRL5(KLHDC1) complex mediates ubiquitination and degradation of truncated SELENOS selenoprotein produced by failed UGA/Sec decoding, which ends with a glycine. The polypeptide is Kelch domain-containing protein 1 (Mus musculus (Mouse)).